Reading from the N-terminus, the 340-residue chain is Glycerol-3-phosphate dehydrogenase [NAD(P)+] (340 aa).

Positions 12, 13, and 110 each coordinate NADPH. 3 residues coordinate sn-glycerol 3-phosphate: Lys110, Gly141, and Ser143. Ala145 contributes to the NADPH binding site. Lys196, Asp249, Ser259, Arg260, and Asn261 together coordinate sn-glycerol 3-phosphate. Lys196 (proton acceptor) is an active-site residue. Arg260 contributes to the NADPH binding site. NADPH is bound by residues Val284 and Glu286.

The protein belongs to the NAD-dependent glycerol-3-phosphate dehydrogenase family.

The protein resides in the cytoplasm. It carries out the reaction sn-glycerol 3-phosphate + NAD(+) = dihydroxyacetone phosphate + NADH + H(+). The catalysed reaction is sn-glycerol 3-phosphate + NADP(+) = dihydroxyacetone phosphate + NADPH + H(+). It functions in the pathway membrane lipid metabolism; glycerophospholipid metabolism. In terms of biological role, catalyzes the reduction of the glycolytic intermediate dihydroxyacetone phosphate (DHAP) to sn-glycerol 3-phosphate (G3P), the key precursor for phospholipid synthesis. The protein is Glycerol-3-phosphate dehydrogenase [NAD(P)+] of Latilactobacillus sakei subsp. sakei (strain 23K) (Lactobacillus sakei subsp. sakei).